The primary structure comprises 384 residues: tRNA-specific 2-thiouridylase MnmA (384 aa).

ATP contacts are provided by residues 21–28 (GMSGGVDS) and methionine 47. The interaction with target base in tRNA stretch occupies residues 107–109 (NPD). Catalysis depends on cysteine 112, which acts as the Nucleophile. A disulfide bridge links cysteine 112 with cysteine 208. Residue glycine 136 participates in ATP binding. Residues 158-160 (KDQ) are interaction with tRNA. Catalysis depends on cysteine 208, which acts as the Cysteine persulfide intermediate. The segment at 320–321 (RY) is interaction with tRNA.

It belongs to the MnmA/TRMU family.

Its subcellular location is the cytoplasm. It carries out the reaction S-sulfanyl-L-cysteinyl-[protein] + uridine(34) in tRNA + AH2 + ATP = 2-thiouridine(34) in tRNA + L-cysteinyl-[protein] + A + AMP + diphosphate + H(+). Catalyzes the 2-thiolation of uridine at the wobble position (U34) of tRNA, leading to the formation of s(2)U34. The polypeptide is tRNA-specific 2-thiouridylase MnmA (Chromohalobacter salexigens (strain ATCC BAA-138 / DSM 3043 / CIP 106854 / NCIMB 13768 / 1H11)).